We begin with the raw amino-acid sequence, 465 residues long: Phenylalanine--tRNA ligase alpha subunit (465 aa).

L-phenylalanine is bound by residues T309, 348–350 (QLD), and F388. A Mg(2+)-binding site is contributed by E390.

Belongs to the class-II aminoacyl-tRNA synthetase family. Phe-tRNA synthetase alpha subunit type 2 subfamily. In terms of assembly, tetramer of two alpha and two beta subunits. Requires Mg(2+) as cofactor.

It localises to the cytoplasm. The enzyme catalyses tRNA(Phe) + L-phenylalanine + ATP = L-phenylalanyl-tRNA(Phe) + AMP + diphosphate + H(+). In Sulfolobus acidocaldarius (strain ATCC 33909 / DSM 639 / JCM 8929 / NBRC 15157 / NCIMB 11770), this protein is Phenylalanine--tRNA ligase alpha subunit.